Reading from the N-terminus, the 235-residue chain is MANLVFLRHGESIWNKMNIFTGWVDVPLSKGGVKEAKIAGKLLKSYKFDVAYSSELIRALNTLILVMQENKASNFIKINHDSVKMKEWGKVYGAESINYTPVYKSWELNERYYGKLQGLNKERAKEIYGKDDVFLWRRSYETAPPNGESLKDTYERTVPYLKRYILPTLTYGKDVIVTAHGNSLRSIIAYLEKLNSEEVLKLEIPTGVPLVYNLDEKGLKRLGYLNKKGFDNELI.

Residues 8 to 15 (RHGESIWN), 21 to 22 (TG), Arg58, 110 to 113 (ERYY), Lys121, 137 to 138 (RR), and 181 to 182 (GN) each bind substrate. Catalysis depends on His9, which acts as the Tele-phosphohistidine intermediate. Residue Glu110 is the Proton donor/acceptor of the active site.

This sequence belongs to the phosphoglycerate mutase family. BPG-dependent PGAM subfamily.

The catalysed reaction is (2R)-2-phosphoglycerate = (2R)-3-phosphoglycerate. Its pathway is carbohydrate degradation; glycolysis; pyruvate from D-glyceraldehyde 3-phosphate: step 3/5. Functionally, catalyzes the interconversion of 2-phosphoglycerate and 3-phosphoglycerate. In Methanococcus vannielii (strain ATCC 35089 / DSM 1224 / JCM 13029 / OCM 148 / SB), this protein is 2,3-bisphosphoglycerate-dependent phosphoglycerate mutase.